Here is a 692-residue protein sequence, read N- to C-terminus: Elongation factor G (692 aa).

The tr-type G domain occupies 8–282 (AKTRNIGIMA…AVIDYLPSPL (275 aa)). GTP-binding positions include 17-24 (AHVDAGKT), 81-85 (DTPGH), and 135-138 (NKMD).

It belongs to the TRAFAC class translation factor GTPase superfamily. Classic translation factor GTPase family. EF-G/EF-2 subfamily.

The protein localises to the cytoplasm. Its function is as follows. Catalyzes the GTP-dependent ribosomal translocation step during translation elongation. During this step, the ribosome changes from the pre-translocational (PRE) to the post-translocational (POST) state as the newly formed A-site-bound peptidyl-tRNA and P-site-bound deacylated tRNA move to the P and E sites, respectively. Catalyzes the coordinated movement of the two tRNA molecules, the mRNA and conformational changes in the ribosome. The polypeptide is Elongation factor G (Streptococcus uberis (strain ATCC BAA-854 / 0140J)).